Consider the following 144-residue polypeptide: Large ribosomal subunit protein uL16 (144 aa).

The span at 1–19 shows a compositional bias: basic residues; that stretch reads MLLPKRVKYRRQHRPKTTG. Residues 1-26 are disordered; the sequence is MLLPKRVKYRRQHRPKTTGRSKGGNE.

This sequence belongs to the universal ribosomal protein uL16 family. As to quaternary structure, part of the 50S ribosomal subunit.

Functionally, binds 23S rRNA and is also seen to make contacts with the A and possibly P site tRNAs. In Macrococcus caseolyticus (strain JCSC5402) (Macrococcoides caseolyticum), this protein is Large ribosomal subunit protein uL16.